The following is a 455-amino-acid chain: Mycosin-4 (455 aa).

A signal peptide spans 1 to 25 (MTTSRTLRLLVVSALATLSGLGTPV). One can recognise a Peptidase S8 domain in the interval 74–384 (SAQLADLDQV…NGTVDALAAV (311 aa)). Catalysis depends on charge relay system residues Asp-98, His-129, and Ser-329. The tract at residues 389 to 417 (IPQAGTATSDPAPVAVPVPRRSTPGPSDR) is disordered. The span at 394–412 (TATSDPAPVAVPVPRRSTP) shows a compositional bias: low complexity. The chain crosses the membrane as a helical span at residues 432 to 452 (LALMATLATASRRLRPGRNGI).

The protein belongs to the peptidase S8 family.

Its subcellular location is the cell membrane. This Mycobacterium tuberculosis (strain ATCC 25618 / H37Rv) protein is Mycosin-4.